Here is a 539-residue protein sequence, read N- to C-terminus: 2-isopropylmalate synthase (539 aa).

Residues 8–269 (VLIFDTTLRD…YFNPFFGRPP (262 aa)) form the Pyruvate carboxyltransferase domain. The Mn(2+) site is built by Asp17, His208, His210, and Asn244. Residues 408 to 539 (QLKLVQVSCG…DLAKVEKKGI (132 aa)) are regulatory domain.

Belongs to the alpha-IPM synthase/homocitrate synthase family. LeuA type 1 subfamily. Homodimer. The cofactor is Mn(2+).

Its subcellular location is the cytoplasm. The catalysed reaction is 3-methyl-2-oxobutanoate + acetyl-CoA + H2O = (2S)-2-isopropylmalate + CoA + H(+). It participates in amino-acid biosynthesis; L-leucine biosynthesis; L-leucine from 3-methyl-2-oxobutanoate: step 1/4. Its function is as follows. Catalyzes the condensation of the acetyl group of acetyl-CoA with 3-methyl-2-oxobutanoate (2-ketoisovalerate) to form 3-carboxy-3-hydroxy-4-methylpentanoate (2-isopropylmalate). This Prochlorococcus marinus (strain NATL2A) protein is 2-isopropylmalate synthase.